The following is a 426-amino-acid chain: uncharacterized protein (426 aa).

Positions 17 to 114 (KRDRPFSPDR…PDKKGEYIYP (98 aa)) are disordered.

The protein resides in the plastid. This is an uncharacterized protein from Euglena longa (Euglenophycean alga).